Reading from the N-terminus, the 356-residue chain is Pyrimidine monooxygenase RutA (356 aa).

FMN-binding positions include 49–50 (IK), Asn-115, Glu-124, 140–141 (RY), and Ser-190.

It belongs to the NtaA/SnaA/DszA monooxygenase family. RutA subfamily.

The enzyme catalyses uracil + FMNH2 + NADH + O2 = (Z)-3-ureidoacrylate + FMN + NAD(+) + H2O + H(+). The catalysed reaction is thymine + FMNH2 + NADH + O2 = (Z)-2-methylureidoacrylate + FMN + NAD(+) + H2O + H(+). Functionally, catalyzes the pyrimidine ring opening between N-3 and C-4 by an unusual flavin hydroperoxide-catalyzed mechanism, adding oxygen atoms in the process to yield ureidoacrylate peracid, that immediately reacts with FMN forming ureidoacrylate and FMN-N(5)-oxide. The FMN-N(5)-oxide reacts spontaneously with NADH to produce FMN. Requires the flavin reductase RutF to regenerate FMN in vivo. The polypeptide is Pyrimidine monooxygenase RutA (Haliangium ochraceum (strain DSM 14365 / JCM 11303 / SMP-2)).